The sequence spans 486 residues: uncharacterized protein (486 aa).

Belongs to the UbiD family.

This is an uncharacterized protein from Aquifex aeolicus (strain VF5).